Consider the following 113-residue polypeptide: Large ribosomal subunit protein bL19 (113 aa).

The protein belongs to the bacterial ribosomal protein bL19 family.

This protein is located at the 30S-50S ribosomal subunit interface and may play a role in the structure and function of the aminoacyl-tRNA binding site. This chain is Large ribosomal subunit protein bL19, found in Mycolicibacterium vanbaalenii (strain DSM 7251 / JCM 13017 / BCRC 16820 / KCTC 9966 / NRRL B-24157 / PYR-1) (Mycobacterium vanbaalenii).